The sequence spans 304 residues: Quinolinate synthase (304 aa).

Residues H23 and S40 each coordinate iminosuccinate. C86 serves as a coordination point for [4Fe-4S] cluster. Residues 112 to 114 (YVN) and S129 contribute to the iminosuccinate site. C173 is a binding site for [4Fe-4S] cluster. Iminosuccinate-binding positions include 199–201 (HPE) and T216. C260 lines the [4Fe-4S] cluster pocket.

It belongs to the quinolinate synthase family. Type 2 subfamily. It depends on [4Fe-4S] cluster as a cofactor.

Its subcellular location is the cytoplasm. The catalysed reaction is iminosuccinate + dihydroxyacetone phosphate = quinolinate + phosphate + 2 H2O + H(+). It participates in cofactor biosynthesis; NAD(+) biosynthesis; quinolinate from iminoaspartate: step 1/1. In terms of biological role, catalyzes the condensation of iminoaspartate with dihydroxyacetone phosphate to form quinolinate. The polypeptide is Quinolinate synthase (Methanothermobacter thermautotrophicus (strain ATCC 29096 / DSM 1053 / JCM 10044 / NBRC 100330 / Delta H) (Methanobacterium thermoautotrophicum)).